Consider the following 234-residue polypeptide: MSNHQKRLSVPNSWPVERKTATFTVKAGAGPHGESGVPLLIVLRDVLGYADNRKEARYALNEDNVLINGKAISDEERPVGMFDILAFTEREEYYRVFPGEGGRLALTAIDPDAAQSKLGKIVTKTHVSGGDVQLGLHDGETLIVEDDQTYDAGDSIVVGNEDGEVVAHFEYEEGALVTAVDGAHAGEVGEVEEIQVTPGSAQNNVIVSQDEGEGFETVEEYVVVIDENFTGDDE.

Residues 37 to 99 (VPLLIVLRDV…REEYYRVFPG (63 aa)) form the S4 RNA-binding domain.

It belongs to the eukaryotic ribosomal protein eS4 family.

This Haloarcula marismortui (strain ATCC 43049 / DSM 3752 / JCM 8966 / VKM B-1809) (Halobacterium marismortui) protein is Small ribosomal subunit protein eS4 (rps4e).